The sequence spans 88 residues: MDQLNVKEQQDFQQIVEQKQMKDFMRLYSNLVSKCFDDCVNDFTSNNLTTKETGCITKCSEKFLKHSERVGQRFQEQNALLMQNMQKR.

The Twin CX3C motif motif lies at 35–59 (CFDDCVNDFTSNNLTTKETGCITKC). Cystine bridges form between Cys-35/Cys-59 and Cys-39/Cys-55.

It belongs to the small Tim family. In terms of assembly, heterohexamer; composed of 3 copies of TIM9 and 3 copies of TIM10, named soluble 70 kDa complex. Associates with the TIM22 complex, whose core is composed of TIM22 and TIM54. Interacts with the transmembrane regions of multi-pass transmembrane proteins in transit.

It localises to the mitochondrion inner membrane. In terms of biological role, mitochondrial intermembrane chaperone that participates in the import and insertion of multi-pass transmembrane proteins into the mitochondrial inner membrane. Also required for the transfer of beta-barrel precursors from the TOM complex to the sorting and assembly machinery (SAM complex) of the outer membrane. Acts as a chaperone-like protein that protects the hydrophobic precursors from aggregation and guide them through the mitochondrial intermembrane space. The sequence is that of Mitochondrial import inner membrane translocase subunit TIM9 (TIM9) from Debaryomyces hansenii (strain ATCC 36239 / CBS 767 / BCRC 21394 / JCM 1990 / NBRC 0083 / IGC 2968) (Yeast).